A 786-amino-acid polypeptide reads, in one-letter code: LPS-assembly protein LptD (786 aa).

The signal sequence occupies residues 1–24; sequence MKKRIPTLLATMIASALYSHQGLA. Cystine bridges form between Cys31-Cys726 and Cys173-Cys727.

This sequence belongs to the LptD family. In terms of assembly, component of the lipopolysaccharide transport and assembly complex. Interacts with LptE and LptA. Post-translationally, contains two intramolecular disulfide bonds.

It is found in the cell outer membrane. Functionally, together with LptE, is involved in the assembly of lipopolysaccharide (LPS) at the surface of the outer membrane. In Salmonella choleraesuis (strain SC-B67), this protein is LPS-assembly protein LptD.